Here is a 443-residue protein sequence, read N- to C-terminus: Tubulin beta chain (443 aa).

GTP is bound by residues glutamine 11, glutamate 69, serine 138, glycine 142, threonine 143, glycine 144, asparagine 204, and asparagine 226. Position 69 (glutamate 69) interacts with Mg(2+).

This sequence belongs to the tubulin family. As to quaternary structure, dimer of alpha and beta chains. A typical microtubule is a hollow water-filled tube with an outer diameter of 25 nm and an inner diameter of 15 nM. Alpha-beta heterodimers associate head-to-tail to form protofilaments running lengthwise along the microtubule wall with the beta-tubulin subunit facing the microtubule plus end conferring a structural polarity. Microtubules usually have 13 protofilaments but different protofilament numbers can be found in some organisms and specialized cells. Mg(2+) is required as a cofactor.

It localises to the cytoplasm. The protein resides in the cytoskeleton. Functionally, tubulin is the major constituent of microtubules, a cylinder consisting of laterally associated linear protofilaments composed of alpha- and beta-tubulin heterodimers. Microtubules grow by the addition of GTP-tubulin dimers to the microtubule end, where a stabilizing cap forms. Below the cap, tubulin dimers are in GDP-bound state, owing to GTPase activity of alpha-tubulin. The polypeptide is Tubulin beta chain (Thalassiosira weissflogii (Marine diatom)).